The sequence spans 65 residues: Large ribosomal subunit protein bL35 (65 aa).

A disordered region spans residues 1–65; that stretch reads MQKIKTNRSA…KELKRLLPGM (65 aa). Composition is skewed to basic residues over residues 10-19 and 33-47; these read AAKRFKRTKS and LTKKNRKRKRSLRKS. Over residues 54–65 the composition is skewed to basic and acidic residues; the sequence is NNKELKRLLPGM.

This sequence belongs to the bacterial ribosomal protein bL35 family.

The protein is Large ribosomal subunit protein bL35 of Desulfosudis oleivorans (strain DSM 6200 / JCM 39069 / Hxd3) (Desulfococcus oleovorans).